The primary structure comprises 419 residues: Adenylosuccinate synthetase (419 aa).

GTP-binding positions include 11–17 and 39–41; these read GDEGKGK and GHT. The active-site Proton acceptor is the D12. Mg(2+) contacts are provided by D12 and G39. Residues 12–15, 37–40, T129, R143, N218, T233, and R297 each bind IMP; these read DEGK and NAGH. H40 serves as the catalytic Proton donor. Position 293–299 (293–299) interacts with substrate; the sequence is VTTGRKR. GTP contacts are provided by residues R299, 325 to 327, and 407 to 409; these read KLD and GTG.

It belongs to the adenylosuccinate synthetase family. Homodimer. Mg(2+) is required as a cofactor.

It localises to the cytoplasm. The catalysed reaction is IMP + L-aspartate + GTP = N(6)-(1,2-dicarboxyethyl)-AMP + GDP + phosphate + 2 H(+). It participates in purine metabolism; AMP biosynthesis via de novo pathway; AMP from IMP: step 1/2. Plays an important role in the de novo pathway and in the salvage pathway of purine nucleotide biosynthesis. Catalyzes the first committed step in the biosynthesis of AMP from IMP. This is Adenylosuccinate synthetase from Coccidioides posadasii (strain C735) (Valley fever fungus).